The chain runs to 187 residues: Small monomeric GTPase RhbA (187 aa).

Serine 17, valine 18, glycine 19, lysine 20, serine 21, serine 22, valine 33, and glutamate 34 together coordinate GDP. Position 17 (serine 17) interacts with GTP. GTP-binding residues include glycine 19, lysine 20, serine 21, serine 22, and valine 33. Mg(2+) is bound at residue serine 21. The GTP site is built by tyrosine 36, threonine 39, asparagine 120, aspartate 123, and alanine 152. The Effector region signature appears at 36–44 (YYPTIENTF). Threonine 39 contributes to the Mg(2+) binding site. The GDP site is built by asparagine 120, aspartate 123, and alanine 152. The S-farnesyl cysteine moiety is linked to residue cysteine 184.

This sequence belongs to the small GTPase superfamily. Rheb family. Farnesylation is important for efficiently activating mTORC1-mediated signaling.

The protein resides in the cell membrane. The enzyme catalyses GTP + H2O = GDP + phosphate + H(+). With respect to regulation, alternates between an inactive form bound to GDP and an active form bound to GTP. Small GTPase that acts as an allosteric activator of the canonical TOR pathway, an evolutionarily conserved central nutrient sensor that stimulates anabolic reactions and macromolecule biosynthesis to promote cellular biomass generation and growth. Plays a role in virulence. This is Small monomeric GTPase RhbA from Aspergillus fumigatus (strain ATCC MYA-4609 / CBS 101355 / FGSC A1100 / Af293) (Neosartorya fumigata).